The following is a 427-amino-acid chain: MENTEQEHNLPEGDETQWPNGVKRKRKNSQCSMNSTSDKSISVPGYVPSYLEKDEPCVVCGDKATGYHYRCITCEGCKGFFRRTIQKNLHPSYSCKYDSCCIIDKITRNQCQLCRFRKCISVGMAMDLVLDDSKRVAKRRLIEENREKRKKEEIVKTLHNRPEPTVSEWELIRMVTEAHRHTNAQGPHWKQKRKFLPEDIGQSPAPTSDNDKVDLEAFSEFTKIITPAITRVVDFAKKLPMFSELPCEDQIILLKGCCMEIMSLRAAVRYDPESETLTLSGEMAVSREQLKNGGLGVVSDAIFDLGKSLSQFNLDDSEVALLQAVLLMSSDRSGLTCVEKIEKCQEMYLLAFEHYINHRKHNISHFWPKLLMKVTNLRMIGACHASRFLHMKVECPTELFPPLFLEVFEDQEGSTGVAAQEDGSCLR.

A compositionally biased stretch (basic and acidic residues) spans 1-11 (MENTEQEHNLP). Residues 1 to 40 (MENTEQEHNLPEGDETQWPNGVKRKRKNSQCSMNSTSDKS) form a disordered region. The interval 1–56 (MENTEQEHNLPEGDETQWPNGVKRKRKNSQCSMNSTSDKSISVPGYVPSYLEKDEP) is modulating. The segment covering 29-40 (SQCSMNSTSDKS) has biased composition (polar residues). NR C4-type zinc fingers lie at residues 57-77 (CVVC…CEGC) and 95-119 (CKYD…FRKC). The segment at residues 57–131 (CVVCGDKATG…VGMAMDLVLD (75 aa)) is a DNA-binding region (nuclear receptor). An NR LBD domain is found at 167-410 (SEWELIRMVT…PPLFLEVFED (244 aa)).

The protein belongs to the nuclear hormone receptor family. NR1 subfamily. Interacts with ncoa2. As to expression, after the mid-blastula transition (MBT), expressed throughout the deep cells, which give rise to the embryo proper. In adults, isoform 2 shows highest expression in the eye and liver. Expressed in adult gonads.

It localises to the nucleus. Its function is as follows. High affinity receptor for triiodothyronine. In the absence of thyroid hormone during late blastula stage development, acts as a transcriptional repressor. Whereas in the presence of thyroid hormone, can act as an activator of transcription. In addition, represses retinoic acid (RA)-signaling during blastula and gastrula stages of development. This Danio rerio (Zebrafish) protein is Thyroid hormone receptor alpha-A (thraa).